Reading from the N-terminus, the 382-residue chain is Solvent efflux pump periplasmic linker SrpA (382 aa).

The first 23 residues, 1–23, serve as a signal peptide directing secretion; that stretch reads MRQIRSPRALRVIPLTALMLISG. A lipid anchor (N-palmitoyl cysteine) is attached at Cys24. The S-diacylglycerol cysteine moiety is linked to residue Cys24. Positions 98 to 127 form a coiled coil; sequence RTYEAQLRRAEANRTSAQNLARRYETLLKT.

The protein belongs to the membrane fusion protein (MFP) (TC 8.A.1) family.

It is found in the cell inner membrane. The periplasmic linker protein component of an organic solvent efflux pump. Involved in export of a number of low log POW compounds including hexane (log POW 3.5), toluene (log POW 2.5) and dimethylphthalate (log POW 2.3). The solvent resistance phenotype has been postulated to depend on the operon expression level. This chain is Solvent efflux pump periplasmic linker SrpA (srpA), found in Pseudomonas putida (Arthrobacter siderocapsulatus).